The sequence spans 233 residues: Biosynthetic peptidoglycan transglycosylase (233 aa).

Residues 8-28 traverse the membrane as a helical segment; it reads LIALPVGIFIFFNAYVYGNII.

This sequence belongs to the glycosyltransferase 51 family.

The protein resides in the cell inner membrane. The enzyme catalyses [GlcNAc-(1-&gt;4)-Mur2Ac(oyl-L-Ala-gamma-D-Glu-L-Lys-D-Ala-D-Ala)](n)-di-trans,octa-cis-undecaprenyl diphosphate + beta-D-GlcNAc-(1-&gt;4)-Mur2Ac(oyl-L-Ala-gamma-D-Glu-L-Lys-D-Ala-D-Ala)-di-trans,octa-cis-undecaprenyl diphosphate = [GlcNAc-(1-&gt;4)-Mur2Ac(oyl-L-Ala-gamma-D-Glu-L-Lys-D-Ala-D-Ala)](n+1)-di-trans,octa-cis-undecaprenyl diphosphate + di-trans,octa-cis-undecaprenyl diphosphate + H(+). Its pathway is cell wall biogenesis; peptidoglycan biosynthesis. Functionally, peptidoglycan polymerase that catalyzes glycan chain elongation from lipid-linked precursors. The sequence is that of Biosynthetic peptidoglycan transglycosylase from Neisseria gonorrhoeae (strain NCCP11945).